An 857-amino-acid chain; its full sequence is Facilitated trehalose transporter Tret1-1 (857 aa).

Disordered regions lie at residues 1–27 and 92–203; these read MSGRDNRGAGGGGGGHQPLSNAMGKLK and SFRP…KATS. Topologically, residues 1–392 are cytoplasmic; it reads MSGRDNRGAG…VYRPTTNPIY (392 aa). A compositionally biased stretch (basic and acidic residues) spans 134–143; it reads EIREHRDRQQ. The span at 171–181 shows a compositional bias: polar residues; that stretch reads GNSNTNSNKAA. Phosphoserine is present on residues S248, S249, S250, S320, and S322. The tract at residues 327 to 346 is disordered; sequence LTSRQHFQQQRSISTDSRKS. Positions 330–341 are enriched in polar residues; that stretch reads RQHFQQQRSIST. Residues 393-413 form a helical membrane-spanning segment; that stretch reads IWTQVLAALSVSLGSLVVGFV. Topologically, residues 414-440 are extracellular; that stretch reads SAYTSPALVSMTDRNITSFEVTQDAGS. The N-linked (GlcNAc...) asparagine glycan is linked to N428. A helical transmembrane segment spans residues 441 to 461; the sequence is WVGGIMPLAALAGGITGGPLI. At 462-473 the chain is on the cytoplasmic side; sequence EYLGRRNTILAT. The chain crosses the membrane as a helical span at residues 474 to 494; sequence AVPFIVSSLLIACAVNVAMVL. The Extracellular segment spans residues 495 to 497; sequence CGR. A helical membrane pass occupies residues 498-518; sequence FLAGFCVGIASLSLPVYLGET. The Cytoplasmic portion of the chain corresponds to 519–528; sequence VQPEVRGTLG. The helical transmembrane segment at 529–549 threads the bilayer; the sequence is LLPTAFGNIGILLCFVAGSFM. N-linked (GlcNAc...) asparagine glycosylation is present at N550. Topologically, residues 550-552 are extracellular; sequence NWS. Residues 553-573 form a helical membrane-spanning segment; it reads MLAFLGAALPVPFLILMFLIP. At 574–636 the chain is on the cytoplasmic side; that stretch reads ETPRWFVGRG…ELLKLNNLKP (63 aa). The helical transmembrane segment at 637 to 657 threads the bilayer; it reads LSISLGLMFFQQFSGINAVIF. Over 658 to 673 the chain is Extracellular; the sequence is YTVQIFKDAGSTIDGN. A helical membrane pass occupies residues 674-694; sequence LCTIIVGIVNFLATFIGIVLI. Topologically, residues 695–700 are cytoplasmic; that stretch reads DRAGRK. The helical transmembrane segment at 701-721 threads the bilayer; that stretch reads ILLYVSDIAMVLTLFVLGGFF. Residues 722 to 740 are Extracellular-facing; it reads YCKANGPDVSHLGWLPLTC. The helical transmembrane segment at 741–761 threads the bilayer; the sequence is FVIYILGFSLGFGPIPWLMMG. Residues 762 to 767 are Cytoplasmic-facing; the sequence is EILPAK. A helical membrane pass occupies residues 768 to 788; it reads IRGSAASVATAFNWFCTFVVT. Over 789–801 the chain is Extracellular; it reads KTFQDLTVAMGAH. A helical transmembrane segment spans residues 802–822; sequence GAFWLFGAICFVGLFFVIIYV. The Cytoplasmic portion of the chain corresponds to 823 to 857; it reads PETQGKTLEDIERKMMGRVRRMSSVANIKPLSFNM. S845 and S846 each carry phosphoserine.

This sequence belongs to the major facilitator superfamily. Sugar transporter (TC 2.A.1.1) family. Trehalose transporter subfamily.

The protein resides in the cell membrane. Functionally, low-capacity facilitative transporter for trehalose. Does not transport maltose, sucrose or lactose. Mediates the bidirectional transfer of trehalose. Responsible for the transport of trehalose synthesized in the fat body and the incorporation of trehalose into other tissues that require a carbon source, thereby regulating trehalose levels in the hemolymph. The chain is Facilitated trehalose transporter Tret1-1 from Drosophila sechellia (Fruit fly).